A 274-amino-acid chain; its full sequence is Mitochondrial S-adenosylmethionine carrier protein (274 aa).

Solcar repeat units lie at residues 4 to 77 (PGFV…VKWF), 86 to 168 (LTPM…LKAL), and 177 to 265 (VDSW…THSL). The next 6 helical transmembrane spans lie at 5-25 (GFVA…LILF), 49-69 (IYAG…AFFI), 85-105 (YLTP…ACLI), 142-162 (RGYK…FPLW), 182-202 (SAVC…PLDV), and 238-258 (FAGV…FLGA).

Belongs to the mitochondrial carrier (TC 2.A.29) family. In terms of tissue distribution, widely expressed. Highly expressed in testis, with moderate expression in brain, heart, kidney, lung, skeletal muscle, pancreas, small intestine and liver, and low expression in spleen.

Its subcellular location is the mitochondrion inner membrane. It catalyses the reaction S-adenosyl-L-homocysteine(out) + S-adenosyl-L-methionine(in) = S-adenosyl-L-homocysteine(in) + S-adenosyl-L-methionine(out). Strongly inhibited by tannic acid and Bromocresol Purple. Functionally, mitochondrial S-adenosyl-L-methionine/S-adenosyl-L-homocysteine antiporter. Mediates the exchange of cytosolic S-adenosyl-L-methionine, the predominant methyl-group donor for macromolecule methylation processes, for mitochondrial S-adenosylhomocysteine(SAH), a by-product of methylation reactions. This Homo sapiens (Human) protein is Mitochondrial S-adenosylmethionine carrier protein.